Reading from the N-terminus, the 28-residue chain is Cyclotide ltri-A (28 aa).

The cyclopeptide (Gly-Asn) cross-link spans 1 to 28 (GVACGESCVYLPCFTVGCTCTSSQCFKN). 3 cysteine pairs are disulfide-bonded: C4/C18, C8/C20, and C13/C25.

Belongs to the cyclotide family. Bracelet subfamily. Post-translationally, this is a cyclic peptide.

Probably participates in a plant defense mechanism. This chain is Cyclotide ltri-A, found in Leonia triandra.